Reading from the N-terminus, the 891-residue chain is Schlafen family member 5 (891 aa).

K59 is covalently cross-linked (Glycyl lysine isopeptide (Lys-Gly) (interchain with G-Cter in SUMO2)). Residue 578–585 (GLPGSGKT) participates in ATP binding.

Belongs to the Schlafen family. Subgroup III subfamily.

May have a role in hematopoietic cell differentiation. In Homo sapiens (Human), this protein is Schlafen family member 5 (SLFN5).